The sequence spans 148 residues: D-aminoacyl-tRNA deacylase (148 aa).

The Gly-cisPro motif, important for rejection of L-amino acids motif lies at 136-137 (GP).

This sequence belongs to the DTD family. As to quaternary structure, homodimer.

It localises to the cytoplasm. It carries out the reaction glycyl-tRNA(Ala) + H2O = tRNA(Ala) + glycine + H(+). It catalyses the reaction a D-aminoacyl-tRNA + H2O = a tRNA + a D-alpha-amino acid + H(+). An aminoacyl-tRNA editing enzyme that deacylates mischarged D-aminoacyl-tRNAs. Also deacylates mischarged glycyl-tRNA(Ala), protecting cells against glycine mischarging by AlaRS. Acts via tRNA-based rather than protein-based catalysis; rejects L-amino acids rather than detecting D-amino acids in the active site. By recycling D-aminoacyl-tRNA to D-amino acids and free tRNA molecules, this enzyme counteracts the toxicity associated with the formation of D-aminoacyl-tRNA entities in vivo and helps enforce protein L-homochirality. This Kosmotoga olearia (strain ATCC BAA-1733 / DSM 21960 / TBF 19.5.1) protein is D-aminoacyl-tRNA deacylase.